Consider the following 503-residue polypeptide: Cytochrome P450 11B1, mitochondrial (503 aa).

The N-terminal 24 residues, 1-24 (MALRAKAEVCMAAPWLSLQRARAL), are a transit peptide targeting the mitochondrion. Cys450 is a binding site for heme.

The protein belongs to the cytochrome P450 family. Heme is required as a cofactor.

Its subcellular location is the mitochondrion inner membrane. The enzyme catalyses a steroid + 2 reduced [adrenodoxin] + O2 + 2 H(+) = an 11beta-hydroxysteroid + 2 oxidized [adrenodoxin] + H2O. It catalyses the reaction 11-deoxycortisol + 2 reduced [adrenodoxin] + O2 + 2 H(+) = cortisol + 2 oxidized [adrenodoxin] + H2O. The catalysed reaction is 21-hydroxyprogesterone + 2 reduced [adrenodoxin] + O2 + 2 H(+) = corticosterone + 2 oxidized [adrenodoxin] + H2O. It carries out the reaction 21-hydroxyprogesterone + 2 reduced [adrenodoxin] + O2 + 2 H(+) = 18-hydroxy-11-deoxycorticosterone + 2 oxidized [adrenodoxin] + H2O. The enzyme catalyses 21-hydroxyprogesterone + 2 reduced [adrenodoxin] + O2 + 2 H(+) = 19-hydroxy-11-deoxycorticosterone + 2 oxidized [adrenodoxin] + H2O. It catalyses the reaction cortisol + 2 reduced [adrenodoxin] + O2 + 2 H(+) = 18-hydroxycortisol + 2 oxidized [adrenodoxin] + H2O. The catalysed reaction is 11-deoxycortisol + 2 reduced [adrenodoxin] + O2 + 2 H(+) = 18-hydroxy-11-deoxycortisol + 2 oxidized [adrenodoxin] + H2O. It participates in steroid biosynthesis; glucocorticoid biosynthesis. Its pathway is steroid hormone biosynthesis. In terms of biological role, a cytochrome P450 monooxygenase involved in the biosynthesis of adrenal corticoids. Catalyzes a variety of reactions that are essential for many species, including detoxification, defense, and the formation of endogenous chemicals like steroid hormones. Steroid 11beta, 18- and 19-hydroxylase with preferred regioselectivity at 11beta, then 18, and lastly 19. Catalyzes the hydroxylation of 11-deoxycortisol and 11-deoxycorticosterone (21-hydroxyprogesterone) at 11beta position, yielding cortisol or corticosterone, respectively, but cannot produce aldosterone. Mechanistically, uses molecular oxygen inserting one oxygen atom into a substrate for hydroxylation and reducing the second into a water molecule. Two electrons are provided by NADPH via a two-protein mitochondrial transfer system comprising flavoprotein FDXR (adrenodoxin/ferredoxin reductase) and nonheme iron-sulfur protein FDX1 or FDX2 (adrenodoxin/ferredoxin). Due to its lack of 18-oxidation activity, it is incapable of generating aldosterone. Could also be involved in the androgen metabolic pathway. The chain is Cytochrome P450 11B1, mitochondrial (CYP11B1) from Papio hamadryas ursinus (Chacma baboon).